We begin with the raw amino-acid sequence, 441 residues long: Deoxyguanosinetriphosphate triphosphohydrolase-like protein 1 (441 aa).

Positions 62 to 255 (RLTHSLEAAQ…MELADDIAYG (194 aa)) constitute an HD domain.

It belongs to the dGTPase family. Type 2 subfamily.

The protein is Deoxyguanosinetriphosphate triphosphohydrolase-like protein 1 of Vibrio cholerae serotype O1 (strain ATCC 39315 / El Tor Inaba N16961).